The primary structure comprises 367 residues: Anhydro-N-acetylmuramic acid kinase (367 aa).

13–20 lines the ATP pocket; the sequence is GTSMDGAD.

Belongs to the anhydro-N-acetylmuramic acid kinase family.

The catalysed reaction is 1,6-anhydro-N-acetyl-beta-muramate + ATP + H2O = N-acetyl-D-muramate 6-phosphate + ADP + H(+). It functions in the pathway amino-sugar metabolism; 1,6-anhydro-N-acetylmuramate degradation. The protein operates within cell wall biogenesis; peptidoglycan recycling. Functionally, catalyzes the specific phosphorylation of 1,6-anhydro-N-acetylmuramic acid (anhMurNAc) with the simultaneous cleavage of the 1,6-anhydro ring, generating MurNAc-6-P. Is required for the utilization of anhMurNAc either imported from the medium or derived from its own cell wall murein, and thus plays a role in cell wall recycling. This is Anhydro-N-acetylmuramic acid kinase from Neisseria meningitidis serogroup C / serotype 2a (strain ATCC 700532 / DSM 15464 / FAM18).